The primary structure comprises 489 residues: Fumarate reductase (CoM/CoB) subunit B (489 aa).

One can recognise a 2Fe-2S ferredoxin-type domain in the interval I2–P89. C53, C58, C61, and C73 together coordinate [2Fe-2S] cluster. 4Fe-4S ferredoxin-type domains lie at P124–P158 and A178–A209. [4Fe-4S] cluster is bound by residues C136, C139, C142, C146, C189, C192, C195, and C199.

Subunit B of the heterodimeric fumarate reductase of methanogenic Archaea, composed of subunits A (TfrA) and B (TfrB). [2Fe-2S] cluster serves as cofactor. It depends on [4Fe-4S] cluster as a cofactor.

It is found in the cytoplasm. The catalysed reaction is coenzyme B + coenzyme M + fumarate = coenzyme M-coenzyme B heterodisulfide + succinate. Its function is as follows. Catalyzes the reduction of fumarate with reduced coenzyme M (CoM-S-H) and coenzyme B (CoB-S-H). In vitro, is able to reduces fumarate with reduced benzyl viologen, oxidize CoM-S-H and CoB-S-H to CoM-S-S-CoB with methylene blue, and reduce CoM-S-S-CoB with reduced benzyl viologen. The enzyme has specificity for the two thiol compounds as the CoB--CoM heterodisulfide reductase. The enzyme is very sensitive to oxygen. The sequence is that of Fumarate reductase (CoM/CoB) subunit B from Methanothermobacter marburgensis (strain ATCC BAA-927 / DSM 2133 / JCM 14651 / NBRC 100331 / OCM 82 / Marburg) (Methanobacterium thermoautotrophicum).